A 151-amino-acid chain; its full sequence is Macrodomain Ter protein (151 aa).

Belongs to the MatP family. Homodimer.

It localises to the cytoplasm. Required for spatial organization of the terminus region of the chromosome (Ter macrodomain) during the cell cycle. Prevents early segregation of duplicated Ter macrodomains during cell division. Binds specifically to matS, which is a 13 bp signature motif repeated within the Ter macrodomain. In Vibrio atlanticus (strain LGP32) (Vibrio splendidus (strain Mel32)), this protein is Macrodomain Ter protein.